The sequence spans 95 residues: Large ribosomal subunit protein bL25 (95 aa).

The protein belongs to the bacterial ribosomal protein bL25 family. In terms of assembly, part of the 50S ribosomal subunit; part of the 5S rRNA/L5/L18/L25 subcomplex. Contacts the 5S rRNA. Binds to the 5S rRNA independently of L5 and L18.

In terms of biological role, this is one of the proteins that binds to the 5S RNA in the ribosome where it forms part of the central protuberance. The polypeptide is Large ribosomal subunit protein bL25 (Mannheimia succiniciproducens (strain KCTC 0769BP / MBEL55E)).